We begin with the raw amino-acid sequence, 367 residues long: C-glycoside deglycosidase alpha subunit (367 aa).

E146 provides a ligand contact to Mg(2+). The active-site Proton acceptor is H148. D178, H276, and E312 together coordinate Mg(2+).

The protein belongs to the C-glycoside deglycosidase alpha subunit family. As to quaternary structure, heterodimer composed of an alpha subunit (CarB1) and a beta subunit (CarC1). The cofactor is Mg(2+).

It catalyses the reaction 3''-dehydroisovitexin = 1,5-anhydro-D-erythro-hex-1-en-3-ulose + apigenin. Activity is strongly reduced in the presence of chelating agents. Its function is as follows. Carbon-carbon bond-cleaving enzyme which participates in the metabolism of C-glycosides. Acts on the C6-glycosylated compound 3''-dehydroisovitexin (3''-oxo-isovitexin). Shows weak activity with 3''-dehydroisoorientin (3''-oxo-homoorientin) and 3'-dehydromangiferin (3'-oxo-mangiferin). This Arthrobacter globiformis (strain ATCC 8010 / DSM 20124 / JCM 1332 / NBRC 12137 / NCIMB 8907 / NRRL B-2979 / 168) protein is C-glycoside deglycosidase alpha subunit.